The chain runs to 776 residues: DNA topoisomerase 1 (776 aa).

One can recognise a Toprim domain in the interval 1–111 (MKLVIVESPA…VESDDFFKRV (111 aa)). Mg(2+) is bound by residues Glu-7 and Asp-80. The Topo IA-type catalytic domain occupies 132-568 (DTNLVNAQQA…FWRGFNHNIE (437 aa)). The tract at residues 166 to 171 (SAGRVQ) is interaction with DNA. Catalysis depends on Tyr-304, which acts as the O-(5'-phospho-DNA)-tyrosine intermediate. The segment at 600–627 (CPSCKTGQLSLKLGKFGAFLACSNYPEC) adopts a C4-type zinc-finger fold.

This sequence belongs to the type IA topoisomerase family. In terms of assembly, monomer. The cofactor is Mg(2+).

It catalyses the reaction ATP-independent breakage of single-stranded DNA, followed by passage and rejoining.. Functionally, releases the supercoiling and torsional tension of DNA, which is introduced during the DNA replication and transcription, by transiently cleaving and rejoining one strand of the DNA duplex. Introduces a single-strand break via transesterification at a target site in duplex DNA. The scissile phosphodiester is attacked by the catalytic tyrosine of the enzyme, resulting in the formation of a DNA-(5'-phosphotyrosyl)-enzyme intermediate and the expulsion of a 3'-OH DNA strand. The free DNA strand then undergoes passage around the unbroken strand, thus removing DNA supercoils. Finally, in the religation step, the DNA 3'-OH attacks the covalent intermediate to expel the active-site tyrosine and restore the DNA phosphodiester backbone. The protein is DNA topoisomerase 1 of Rickettsia prowazekii (strain Madrid E).